The chain runs to 380 residues: Erythronate-4-phosphate dehydrogenase (380 aa).

Substrate-binding residues include Ser-45 and Thr-66. NAD(+) is bound by residues 126–127 (QV), Asp-146, Thr-174, 205–207 (ASR), and Asp-231. Residue Arg-207 is part of the active site. Glu-236 is an active-site residue. His-253 serves as the catalytic Proton donor. Position 256 (Gly-256) interacts with NAD(+). Tyr-257 lines the substrate pocket.

This sequence belongs to the D-isomer specific 2-hydroxyacid dehydrogenase family. PdxB subfamily. In terms of assembly, homodimer.

Its subcellular location is the cytoplasm. The catalysed reaction is 4-phospho-D-erythronate + NAD(+) = (R)-3-hydroxy-2-oxo-4-phosphooxybutanoate + NADH + H(+). It participates in cofactor biosynthesis; pyridoxine 5'-phosphate biosynthesis; pyridoxine 5'-phosphate from D-erythrose 4-phosphate: step 2/5. Its function is as follows. Catalyzes the oxidation of erythronate-4-phosphate to 3-hydroxy-2-oxo-4-phosphonooxybutanoate. The sequence is that of Erythronate-4-phosphate dehydrogenase from Pseudomonas syringae pv. syringae (strain B728a).